A 125-amino-acid polypeptide reads, in one-letter code: Protein ApaG (125 aa).

The ApaG domain maps to T3–N125.

This chain is Protein ApaG, found in Anaeromyxobacter sp. (strain K).